A 160-amino-acid polypeptide reads, in one-letter code: Cathelin-related peptide SC5 (160 aa).

The signal sequence occupies residues 1–29 (METQRASLSLGRCSLWLLLLGLALPSASA). A propeptide spanning residues 30-131 (QVLSYREAVL…DITCAEPQSV (102 aa)) is cleaved from the precursor. 2 cysteine pairs are disulfide-bonded: C86/C97 and C108/C125.

It belongs to the cathelicidin family.

Its subcellular location is the secreted. In terms of biological role, broad spectrum bactericidal agent. This is Cathelin-related peptide SC5 from Ovis aries (Sheep).